We begin with the raw amino-acid sequence, 55 residues long: Large ribosomal subunit protein bL32 (55 aa).

The disordered stretch occupies residues 1 to 27; it reads MAVQQNKPTRSKRGMRRSHDALTTATL.

This sequence belongs to the bacterial ribosomal protein bL32 family.

The polypeptide is Large ribosomal subunit protein bL32 (Yersinia enterocolitica serotype O:8 / biotype 1B (strain NCTC 13174 / 8081)).